A 215-amino-acid polypeptide reads, in one-letter code: Probable phosphoglycerate mutase GpmB (215 aa).

Substrate-binding positions include 8–15 (RHGETLWN), 21–22 (QG), R58, 82–85 (ELNM), and 151–152 (GM). The Tele-phosphohistidine intermediate role is filled by H9. E82 functions as the Proton donor/acceptor in the catalytic mechanism.

It belongs to the phosphoglycerate mutase family. GpmB subfamily.

It catalyses the reaction (2R)-2-phosphoglycerate = (2R)-3-phosphoglycerate. The protein operates within carbohydrate degradation; glycolysis; pyruvate from D-glyceraldehyde 3-phosphate: step 3/5. The protein is Probable phosphoglycerate mutase GpmB of Yersinia pseudotuberculosis serotype O:1b (strain IP 31758).